A 461-amino-acid chain; its full sequence is Ribulose bisphosphate carboxylase (461 aa).

Asn112 serves as a coordination point for substrate. Lys167 acts as the Proton acceptor in catalysis. Residue Lys169 participates in substrate binding. Mg(2+)-binding residues include Lys192, Asp194, and Glu195. An N6-carboxylysine modification is found at Lys192. His288 functions as the Proton acceptor in the catalytic mechanism. Residues Arg289, His322, and Ser369 each contribute to the substrate site.

The protein belongs to the RuBisCO large chain family. Type II subfamily. As to quaternary structure, homodimer. It depends on Mg(2+) as a cofactor.

The enzyme catalyses 2 (2R)-3-phosphoglycerate + 2 H(+) = D-ribulose 1,5-bisphosphate + CO2 + H2O. The catalysed reaction is D-ribulose 1,5-bisphosphate + O2 = 2-phosphoglycolate + (2R)-3-phosphoglycerate + 2 H(+). Functionally, ruBisCO catalyzes two reactions: the carboxylation of D-ribulose 1,5-bisphosphate, the primary event in carbon dioxide fixation, as well as the oxidative fragmentation of the pentose substrate. Both reactions occur simultaneously and in competition at the same active site. This is Ribulose bisphosphate carboxylase from Rhodopseudomonas palustris (strain ATCC BAA-98 / CGA009).